The primary structure comprises 541 residues: Glucose-6-phosphate isomerase (541 aa).

Glutamate 353 functions as the Proton donor in the catalytic mechanism. Active-site residues include histidine 384 and lysine 504.

The protein belongs to the GPI family.

It is found in the cytoplasm. The enzyme catalyses alpha-D-glucose 6-phosphate = beta-D-fructose 6-phosphate. It functions in the pathway carbohydrate biosynthesis; gluconeogenesis. It participates in carbohydrate degradation; glycolysis; D-glyceraldehyde 3-phosphate and glycerone phosphate from D-glucose: step 2/4. Catalyzes the reversible isomerization of glucose-6-phosphate to fructose-6-phosphate. This chain is Glucose-6-phosphate isomerase, found in Deinococcus radiodurans (strain ATCC 13939 / DSM 20539 / JCM 16871 / CCUG 27074 / LMG 4051 / NBRC 15346 / NCIMB 9279 / VKM B-1422 / R1).